A 344-amino-acid chain; its full sequence is Cathepsin B-like cysteine proteinase 5 (344 aa).

The first 15 residues, 1–15, serve as a signal peptide directing secretion; the sequence is MWKLSAILLVAAASA. A propeptide spanning residues 16–81 is cleaved from the precursor; it reads VVIPGHREAP…DIVATEVSDA (66 aa). 6 disulfide bridges follow: cysteine 95-cysteine 124, cysteine 107-cysteine 154, cysteine 143-cysteine 213, cysteine 144-cysteine 150, cysteine 183-cysteine 217, and cysteine 191-cysteine 203. Residue cysteine 110 is part of the active site. Active-site residues include histidine 286 and asparagine 306.

The protein belongs to the peptidase C1 family.

This is Cathepsin B-like cysteine proteinase 5 (cpr-5) from Caenorhabditis elegans.